A 119-amino-acid chain; its full sequence is Nascent polypeptide-associated complex protein (119 aa).

An NAC-A/B domain is found at 5-73 (RMNSREMRRL…FRETPKKQEG (69 aa)).

Belongs to the NAC-alpha family. As to quaternary structure, homodimer. Interacts with the ribosome. Binds ribosomal RNA.

In terms of biological role, contacts the emerging nascent chain on the ribosome. This is Nascent polypeptide-associated complex protein from Thermoplasma volcanium (strain ATCC 51530 / DSM 4299 / JCM 9571 / NBRC 15438 / GSS1).